A 718-amino-acid chain; its full sequence is F-box/LRR-repeat protein 18 (718 aa).

The F-box domain occupies 25–72 (GVHLLGFSDEILLHILSHVPSTDLILNVRRTCRKLAALCLDKSLIHTV). LRR repeat units lie at residues 77–103 (DYQA…SMAG), 104–128 (CYWL…NLSG), 129–153 (CHLT…AIDV), 177–201 (KQTL…LLYF), 324–352 (CTLS…NLSG), 367–392 (EDDI…NLSA), 393–422 (AHHH…SLPV), 468–492 (CPQP…ELIG), 516–540 (AQSV…TLAQ), 542–567 (PSVL…SLAN), 572–597 (GKVV…RLEQ), and 599–623 (YFSA…CLVS).

As to quaternary structure, directly interacts with SKP1 and CUL1.

In terms of biological role, substrate-recognition component of the SCF (SKP1-CUL1-F-box protein)-type E3 ubiquitin ligase complex. In Homo sapiens (Human), this protein is F-box/LRR-repeat protein 18 (FBXL18).